The sequence spans 82 residues: Small ribosomal subunit protein bS18 (82 aa).

It belongs to the bacterial ribosomal protein bS18 family. Part of the 30S ribosomal subunit. Forms a tight heterodimer with protein bS6.

Binds as a heterodimer with protein bS6 to the central domain of the 16S rRNA, where it helps stabilize the platform of the 30S subunit. The protein is Small ribosomal subunit protein bS18 of Methylobacterium nodulans (strain LMG 21967 / CNCM I-2342 / ORS 2060).